The sequence spans 148 residues: MAEVNGCQLPEDRLYYINPDKNAFIWAKEEDGVFTIGLTSVAAAMAGRLVAYTPKKVGKAVKKDKSVATIESGKWVGPVPSPFDGEIVEVNEALKGNPALVNDDPYGQGWIAKVKPANPEEAKSVLVDANKAAELLQPIVQEKGVKCG.

One can recognise a Lipoyl-binding domain in the interval 33–115 (VFTIGLTSVA…YGQGWIAKVK (83 aa)). Position 74 is an N6-lipoyllysine (Lys74).

It belongs to the GcvH family. The glycine cleavage system is composed of four proteins: P, T, L and H. (R)-lipoate is required as a cofactor.

In terms of biological role, the glycine cleavage system catalyzes the degradation of glycine. The H protein shuttles the methylamine group of glycine from the P protein to the T protein. This is Glycine cleavage system H protein 5 from Aquifex aeolicus (strain VF5).